A 101-amino-acid polypeptide reads, in one-letter code: Small ribosomal subunit protein uS14 (101 aa).

This sequence belongs to the universal ribosomal protein uS14 family. As to quaternary structure, part of the 30S ribosomal subunit. Contacts proteins S3 and S10.

Functionally, binds 16S rRNA, required for the assembly of 30S particles and may also be responsible for determining the conformation of the 16S rRNA at the A site. This chain is Small ribosomal subunit protein uS14, found in Francisella tularensis subsp. holarctica (strain FTNF002-00 / FTA).